We begin with the raw amino-acid sequence, 246 residues long: 3-deoxy-manno-octulosonate cytidylyltransferase (246 aa).

This sequence belongs to the KdsB family.

It localises to the cytoplasm. It catalyses the reaction 3-deoxy-alpha-D-manno-oct-2-ulosonate + CTP = CMP-3-deoxy-beta-D-manno-octulosonate + diphosphate. The protein operates within nucleotide-sugar biosynthesis; CMP-3-deoxy-D-manno-octulosonate biosynthesis; CMP-3-deoxy-D-manno-octulosonate from 3-deoxy-D-manno-octulosonate and CTP: step 1/1. It participates in bacterial outer membrane biogenesis; lipopolysaccharide biosynthesis. Functionally, activates KDO (a required 8-carbon sugar) for incorporation into bacterial lipopolysaccharide in Gram-negative bacteria. The chain is 3-deoxy-manno-octulosonate cytidylyltransferase from Leptospira borgpetersenii serovar Hardjo-bovis (strain JB197).